The sequence spans 107 residues: Conantokin-R (107 aa).

Positions 1–24 are cleaved as a signal peptide; the sequence is MQLYTYLYLLVSLVTFYLILGTGT. Positions 25–80 are excised as a propeptide; sequence LGHGGALTERRSTDATALKPEPVLLQKSSARSTDDNGNDRLTQMKRILKKRGNKAR. The interval 26–64 is disordered; sequence GHGGALTERRSTDATALKPEPVLLQKSSARSTDDNGNDR. 4 positions are modified to 4-carboxyglutamate: Glu-83, Glu-84, Glu-91, and Glu-95. A divalent metal cation-binding residues include Glu-91 and Glu-95. Cys-101 and Cys-105 are joined by a disulfide.

Belongs to the conotoxin B superfamily. Requires Ca(2+) as cofactor. Mg(2+) serves as cofactor. As to expression, expressed by the venom duct.

The protein localises to the secreted. In terms of biological role, conantokins inhibit N-methyl-D-aspartate (NMDA) receptors. This toxin is potent in the following order of preference: NR2B approximately NR2A/GRIN2A &gt; NR2C/GRIN2C &gt;&gt; NR2D/GRIN2D. Induces sleep-like symptoms in young mice. Is a highly potent anticonvulsant compound. The sequence is that of Conantokin-R from Conus radiatus (Rayed cone).